Here is a 261-residue protein sequence, read N- to C-terminus: Adenosylcobinamide-GDP ribazoletransferase (261 aa).

7 helical membrane passes run 4 to 26, 40 to 60, 62 to 82, 110 to 130, 140 to 160, 197 to 217, and 237 to 257; these read GLNGLLLAFQFLTTVPITRQIPW, LTGLVLGGLLVSLYLLLSPFL, PLVLAALLVTLSIFYSGGLHL, VGAFAVMTTILLIGWKVLLLM, FTWLLLLVPVCLRWMIIVQLI, CFLLLQNVILTLCFLLMIWLF, and IGASIEGGELFLWGIMWTFFL.

Belongs to the CobS family. The cofactor is Mg(2+).

It is found in the cell membrane. The enzyme catalyses alpha-ribazole + adenosylcob(III)inamide-GDP = adenosylcob(III)alamin + GMP + H(+). The catalysed reaction is alpha-ribazole 5'-phosphate + adenosylcob(III)inamide-GDP = adenosylcob(III)alamin 5'-phosphate + GMP + H(+). Its pathway is cofactor biosynthesis; adenosylcobalamin biosynthesis; adenosylcobalamin from cob(II)yrinate a,c-diamide: step 7/7. Its function is as follows. Joins adenosylcobinamide-GDP and alpha-ribazole to generate adenosylcobalamin (Ado-cobalamin). Also synthesizes adenosylcobalamin 5'-phosphate from adenosylcobinamide-GDP and alpha-ribazole 5'-phosphate. The sequence is that of Adenosylcobinamide-GDP ribazoletransferase from Halalkalibacterium halodurans (strain ATCC BAA-125 / DSM 18197 / FERM 7344 / JCM 9153 / C-125) (Bacillus halodurans).